Consider the following 1235-residue polypeptide: Serine/threonine-protein kinase TAO2 (1235 aa).

Residue S9 is modified to Phosphoserine. The Protein kinase domain occupies 28–281; the sequence is FSDLREIGHG…SEVLLKHRFV (254 aa). ATP is bound by residues 34–42 and K57; that span reads IGHGSFGAV. 106–108 contacts staurosporine; the sequence is EYC. D151 serves as the catalytic Proton acceptor. G155 serves as a coordination point for staurosporine. Position 181 is a phosphoserine (S181). The interval 318-457 is disordered; that stretch reads QEAPNGPGAE…PTSTSSSSAR (140 aa). Positions 350 to 374 are enriched in low complexity; the sequence is SSHSVPSMSISASSQSSSVNSLADA. The segment covering 375 to 395 has biased composition (acidic residues); sequence SDNEEEEEEEEEEEEEEEEEG. The segment covering 396–411 has biased composition (basic and acidic residues); sequence PESREMAMMQEGEHTV. A Phosphoserine modification is found at S416. 2 coiled-coil regions span residues 488 to 523 and 576 to 603; these read SALREQLSGYKRMRRQHQKQLLALESRLRGEREEHS and KELAALLEAQKRTYKLRKEQLKEELQEN. Residue S658 is modified to Phosphoserine. The stretch at 683 to 715 forms a coiled coil; that stretch reads LRQHEATRELELRQLQAVQRTRAELTRLQHQTE. 3 positions are modified to phosphoserine: S777, S825, and S827. The tract at residues 892–941 is disordered; the sequence is GPVLTPVPEEEEEEEEEGGAPIGTPRDPGDGCPSPDIPPEPPPSHLRQYP. Residues 899 to 909 show a composition bias toward acidic residues; sequence PEEEEEEEEEG. Residues 926-935 are compositionally biased toward pro residues; it reads PDIPPEPPPS. 3 helical membrane-spanning segments follow: residues 967–987, 989–1009, and 1014–1034; these read LLPLLLLLLLPLLAAQGGGGL, AALLALEVGLVGLGASYLFLC, and LPPSLFLLLAQGTALGAVLSL. Position 1038 is a phosphoserine (R1038). 2 consecutive transmembrane segments (helical) span residues 1040-1060 and 1170-1190; these read LMGVPLGLGAAWLLAWPSLAL and LASCLPPWAVHILASWGLLKG. The tract at residues 1210–1235 is disordered; that stretch reads SASRQLPPGTVAGRRSQTRRALPPWR.

This sequence belongs to the protein kinase superfamily. STE Ser/Thr protein kinase family. STE20 subfamily. In terms of assembly, self-associates. Interacts with MAP2K3 and MAP2K6. Interacts with tubulins. Interacts with MAP3K7 and interferes with MAP3K7-binding to CHUK and thus prevents NF-kappa-B activation. Isoform 2 interacts with PCDH8; this complex may also include CDH2. The cofactor is Mg(2+). Post-translationally, autophosphorylated. Phosphorylated by ATM. Phosphorylated on Ser-1038 by MAPK14. This phosphorylation is required PCDH8 for endocytosis.

It localises to the cytoplasmic vesicle membrane. The protein resides in the cytoplasm. Its subcellular location is the cytoskeleton. It is found in the cell projection. The protein localises to the dendrite. The catalysed reaction is L-seryl-[protein] + ATP = O-phospho-L-seryl-[protein] + ADP + H(+). It carries out the reaction L-threonyl-[protein] + ATP = O-phospho-L-threonyl-[protein] + ADP + H(+). With respect to regulation, moderately inhibited by staurosporine, a broad-range protein kinase inhibitor. Its function is as follows. Serine/threonine-protein kinase involved in different processes such as membrane blebbing and apoptotic bodies formation DNA damage response and MAPK14/p38 MAPK stress-activated MAPK cascade. Phosphorylates itself, MBP, activated MAPK8, MAP2K3, MAP2K6 and tubulins. Activates the MAPK14/p38 MAPK signaling pathway through the specific activation and phosphorylation of the upstream MAP2K3 and MAP2K6 kinases. In response to DNA damage, involved in the G2/M transition DNA damage checkpoint by activating the p38/MAPK14 stress-activated MAPK cascade, probably by mediating phosphorylation of upstream MAP2K3 and MAP2K6 kinases. May affect microtubule organization and stability. May play a role in the osmotic stress-MAPK8 pathway. Prevents MAP3K7-mediated activation of CHUK, and thus NF-kappa-B activation. Isoform 2, but not isoform 1, is required for PCDH8 endocytosis. Following homophilic interactions between PCDH8 extracellular domains, isoform 2 phosphorylates and activates MAPK14/p38 MAPK which in turn phosphorylates isoform 2. This process leads to PCDH8 endocytosis and CDH2 cointernalization. Both isoforms are involved in MAPK14/p38 MAPK activation. The protein is Serine/threonine-protein kinase TAO2 (Taok2) of Rattus norvegicus (Rat).